We begin with the raw amino-acid sequence, 710 residues long: Choline transporter-like protein 4 (710 aa).

Residues 1–34 (MGGKQRDEDDEAYGKPVKYDPSFRGPIKNRSCTD) lie on the Cytoplasmic side of the membrane. Residues 35–55 (VICCVLFLLFILGYIVVGIVA) form a helical membrane-spanning segment. The Extracellular segment spans residues 56-229 (WLYGDPRQVL…KIFEDFAQSW (174 aa)). N-linked (GlcNAc...) asparagine glycans are attached at residues asparagine 69, asparagine 155, and asparagine 197. A helical transmembrane segment spans residues 230–250 (YWILVALGVALVLSLLFILLL). The Cytoplasmic portion of the chain corresponds to 251 to 252 (RL). Residues 253-273 (VAGPLVLVLILGVLGVLAYGI) form a helical membrane-spanning segment. Topologically, residues 274–309 (YYCWEEYRVLRDKGASISQLGFTTNLSAYQSVQETW) are extracellular. Asparagine 298 carries N-linked (GlcNAc...) asparagine glycosylation. A helical transmembrane segment spans residues 310-330 (LAALIVLAVLEAILLLMLIFL). Topologically, residues 331–358 (RQRIRIAIALLKEASKAVGQMMSTMFYP) are cytoplasmic. Residues 359–379 (LVTFVLLLICIAYWAMTALYL) traverse the membrane as a helical segment. Residues 380 to 455 (ATSGQPQYVL…GVLGLFWTLN (76 aa)) lie on the Extracellular side of the membrane. Asparagine 393, asparagine 405, and asparagine 416 each carry an N-linked (GlcNAc...) asparagine glycan. Residues 456 to 476 (WVLALGQCVLAGAFASFYWAF) form a helical membrane-spanning segment. Residues 477-501 (HKPQDIPTFPLISAFIRTLRYHTGS) are Cytoplasmic-facing. A helical transmembrane segment spans residues 502 to 522 (LAFGALILTLVQIARVILEYI). Over 523-560 (DHKLRGVQNPVARCIMCCFKCCLWCLEKFIKFLNRNAY) the chain is Extracellular. Residues 561–581 (IMIAIYGKNFCVSAKNAFMLL) form a helical membrane-spanning segment. At 582–597 (MRNIVRVVVLDKVTDL) the chain is on the cytoplasmic side. The chain crosses the membrane as a helical span at residues 598-618 (LLFFGKLLVVGGVGVLSFFFF). Topologically, residues 619 to 638 (SGRIPGLGKDFKSPHLNYYW) are extracellular. The helical transmembrane segment at 639-659 (LPIMTSILGAYVIASGFFSVF) threads the bilayer. The Cytoplasmic segment spans residues 660–710 (GMCVDTLFLCFLEDLERNNGSLDRPYYMSKSLLKILGKKNEAPPDNKKRKK).

The protein belongs to the CTL (choline transporter-like) family. Post-translationally, N-glycosylated; N-glycosylation of Asn-69, Asn-155 and Asn-393 is required for a proper thiamine pyrophosphate uptake. In terms of tissue distribution, highly expressed in colon, also detected in prostate, trachea and lung. Isoform 3 is also expressed in colon but a lower levels. As to expression, expressed in colon at low levels.

It is found in the membrane. The protein resides in the apical cell membrane. The enzyme catalyses choline(out) + n H(+)(in) = choline(in) + n H(+)(out). It catalyses the reaction thiamine diphosphate(out) = thiamine diphosphate(in). In terms of biological role, choline transporter that plays a role in the choline-acetylcholine system and is required to the efferent innervation of hair cells in the olivocochlear bundle for the maintenance of physiological function of outer hair cells and the protection of hair cells from acoustic injury. Also described as a thiamine pyrophosphate transporter in colon, may mediate the absorption of microbiota-generated thiamine pyrophosphate and contribute to host thiamine (vitamin B1) homeostasis. Its function is as follows. Also has thiamine pyrophosphate transporter activity. The protein is Choline transporter-like protein 4 of Homo sapiens (Human).